The chain runs to 260 residues: MSSTLQAILDDTRRDLAARKSAARTKEFEKRAAEHTPRGFRTALWERAQAGVAVIAELKKASPSKGLIRANFDVIALAKELEEAGAAALSVLTDVPHFQGSLENLERASQTVRIPCLRKDFILDPAQIVEARAYGADAILLIVAALTDLDLRNLRDEAKRYGLDVLCEVHDRDELKRAADLGFDLIGVNNRNLKTFRVDIENSLRFAEEFPPNALRVAESGIHSREDIDRLRDAAYSAFLIGESLMRADSPSATLRELIG.

It belongs to the TrpC family.

It carries out the reaction 1-(2-carboxyphenylamino)-1-deoxy-D-ribulose 5-phosphate + H(+) = (1S,2R)-1-C-(indol-3-yl)glycerol 3-phosphate + CO2 + H2O. Its pathway is amino-acid biosynthesis; L-tryptophan biosynthesis; L-tryptophan from chorismate: step 4/5. The polypeptide is Indole-3-glycerol phosphate synthase (Koribacter versatilis (strain Ellin345)).